The chain runs to 331 residues: tRNA-cytidine(32) 2-sulfurtransferase (331 aa).

A PP-loop motif motif is present at residues 73 to 78 (SGGKDS). 3 residues coordinate [4Fe-4S] cluster: C148, C151, and C239.

It belongs to the TtcA family. As to quaternary structure, homodimer. Requires Mg(2+) as cofactor. [4Fe-4S] cluster serves as cofactor.

The protein resides in the cytoplasm. The enzyme catalyses cytidine(32) in tRNA + S-sulfanyl-L-cysteinyl-[cysteine desulfurase] + AH2 + ATP = 2-thiocytidine(32) in tRNA + L-cysteinyl-[cysteine desulfurase] + A + AMP + diphosphate + H(+). Its pathway is tRNA modification. In terms of biological role, catalyzes the ATP-dependent 2-thiolation of cytidine in position 32 of tRNA, to form 2-thiocytidine (s(2)C32). The sulfur atoms are provided by the cysteine/cysteine desulfurase (IscS) system. The protein is tRNA-cytidine(32) 2-sulfurtransferase of Burkholderia mallei (strain NCTC 10247).